The chain runs to 454 residues: Tubulin gamma chain (454 aa).

Residue 142–148 (AGGTGSG) coordinates GTP.

It belongs to the tubulin family.

The protein resides in the cytoplasm. Its subcellular location is the cytoskeleton. The protein localises to the microtubule organizing center. It localises to the spindle pole body. Tubulin is the major constituent of microtubules. The gamma chain is found at microtubule organizing centers (MTOC) such as the spindle pole or the centrosome, suggesting that it is involved in the minus-end nucleation of microtubule assembly. Interacts physically with beta-tubulin and is involved in microtubule function. The polypeptide is Tubulin gamma chain (mipA) (Emericella nidulans (strain FGSC A4 / ATCC 38163 / CBS 112.46 / NRRL 194 / M139) (Aspergillus nidulans)).